Here is a 483-residue protein sequence, read N- to C-terminus: tRNA sulfurtransferase (483 aa).

The THUMP domain occupies 62–166; sequence PEICDALTRI…QDKLILVKAR (105 aa). ATP contacts are provided by residues 184–185, lysine 266, glycine 288, and glutamine 297; that span reads LI. Cysteine 345 and cysteine 457 form a disulfide bridge. The Rhodanese domain occupies 405-483; it reads LADTDVLLDI…GYTNVKVYRP (79 aa). The active-site Cysteine persulfide intermediate is the cysteine 457.

It belongs to the ThiI family.

It is found in the cytoplasm. The enzyme catalyses [ThiI sulfur-carrier protein]-S-sulfanyl-L-cysteine + a uridine in tRNA + 2 reduced [2Fe-2S]-[ferredoxin] + ATP + H(+) = [ThiI sulfur-carrier protein]-L-cysteine + a 4-thiouridine in tRNA + 2 oxidized [2Fe-2S]-[ferredoxin] + AMP + diphosphate. It catalyses the reaction [ThiS sulfur-carrier protein]-C-terminal Gly-Gly-AMP + S-sulfanyl-L-cysteinyl-[cysteine desulfurase] + AH2 = [ThiS sulfur-carrier protein]-C-terminal-Gly-aminoethanethioate + L-cysteinyl-[cysteine desulfurase] + A + AMP + 2 H(+). It participates in cofactor biosynthesis; thiamine diphosphate biosynthesis. Catalyzes the ATP-dependent transfer of a sulfur to tRNA to produce 4-thiouridine in position 8 of tRNAs, which functions as a near-UV photosensor. Also catalyzes the transfer of sulfur to the sulfur carrier protein ThiS, forming ThiS-thiocarboxylate. This is a step in the synthesis of thiazole, in the thiamine biosynthesis pathway. The sulfur is donated as persulfide by IscS. This is tRNA sulfurtransferase from Yersinia pseudotuberculosis serotype IB (strain PB1/+).